Consider the following 288-residue polypeptide: HTH-type transcriptional regulator CzcR (288 aa).

The region spanning methionine 1–serine 58 is the HTH lysR-type domain. Positions isoleucine 18–lysine 37 form a DNA-binding region, H-T-H motif.

The protein belongs to the LysR transcriptional regulatory family.

This is HTH-type transcriptional regulator CzcR (czcR) from Bacillus subtilis (strain 168).